The sequence spans 436 residues: Histidine--tRNA ligase 1 (436 aa).

Belongs to the class-II aminoacyl-tRNA synthetase family. In terms of assembly, homodimer.

It is found in the cytoplasm. The catalysed reaction is tRNA(His) + L-histidine + ATP = L-histidyl-tRNA(His) + AMP + diphosphate + H(+). The sequence is that of Histidine--tRNA ligase 1 from Bacillus cereus (strain ATCC 10987 / NRS 248).